The following is a 226-amino-acid chain: Lysoplasmalogenase TMEM86B (226 aa).

Residues 1 to 23 are Cytoplasmic-facing; it reads MDARKEGLPLETLFSDQYPQVRR. The chain crosses the membrane as a helical span at residues 24–40; sequence WLAPFILACSLYFLLWI. The Extracellular portion of the chain corresponds to 41–46; that stretch reads PVDQPS. A helical transmembrane segment spans residues 47–68; sequence WVSALIKCQPILCLVVFLWAVA. The Cytoplasmic portion of the chain corresponds to 69-74; that stretch reads PGGSST. A helical membrane pass occupies residues 75–93; it reads WLLQGALVCSAVGDACLIW. The Extracellular segment spans residues 94-99; it reads PEAFFY. Residues 100 to 117 traverse the membrane as a helical segment; the sequence is GTAAFSVAHLFYLGAFGL. Residues 118–123 lie on the Cytoplasmic side of the membrane; that stretch reads TPLQPG. Residues 124-140 form a helical membrane-spanning segment; sequence LLLCTTLASLTYYSFLL. Residues 141–146 are Extracellular-facing; sequence LHLEQG. The chain crosses the membrane as a helical span at residues 147–163; that stretch reads MVLPVMAYGLILNSMLW. Topologically, residues 164–171 are cytoplasmic; it reads RSLVWGGS. The chain crosses the membrane as a helical span at residues 172–188; it reads ASWGAVLFTFSDGVLAW. Topologically, residues 189-199 are extracellular; sequence DTFVYSLPFAR. Residues 200 to 218 traverse the membrane as a helical segment; the sequence is LVTMSTYYAAQLLLILSAL. The Cytoplasmic portion of the chain corresponds to 219–226; it reads RNPGLKTH.

This sequence belongs to the TMEM86 family. Homodimer. As to expression, enriched in liver. Also detected in brain and testis.

It is found in the endoplasmic reticulum membrane. The protein resides in the cytoplasm. The enzyme catalyses a 1-O-(1Z-alkenyl)-sn-glycero-3-phosphocholine + H2O = a 2,3-saturated aldehyde + sn-glycerol 3-phosphocholine. It carries out the reaction a 1-O-(1Z-alkenyl)-sn-glycero-3-phosphoethanolamine + H2O = a 2,3-saturated aldehyde + sn-glycero-3-phosphoethanolamine. Competitively inhibited by lysophosphatidic acid. Its function is as follows. Catalyzes the hydrolysis of the vinyl ether bond of choline or ethanolamine lysoplasmalogens, forming fatty aldehyde and glycerophosphocholine or glycerophosphoethanolamine, respectively and is specific for the sn-2-deacylated (lyso) form of plasmalogen. The polypeptide is Lysoplasmalogenase TMEM86B (Tmem86b) (Mus musculus (Mouse)).